The chain runs to 267 residues: MAGQAPTAVPGSVTGEVSRWQNLGPAQPAQKVAQPQNLVPDGHLEKALEGSDLLQKLGGFHIAIAFAHLAFGGYLISTVKNLHLVVLKCWYPLWGTVSFLVAGMAAMTTVTFPKTSLKVLCVIANVISLFCALAGFFVIAKDLFLEGPFPWPIWRPYPEPTTYIQRLELTLFCFTFLEIFLSGSTAITAYRMKRLQAEDKDDTPFVPDTPMELKGLSLGPPPSYKDVAQGHSSSDTGRALATSSGLLLASDSFHQALLHTGPRTLRK.

Over 1–56 (MAGQAPTAVPGSVTGEVSRWQNLGPAQPAQKVAQPQNLVPDGHLEKALEGSDLLQK) the chain is Cytoplasmic. The chain crosses the membrane as a helical span at residues 57-77 (LGGFHIAIAFAHLAFGGYLIS). Residues 78-83 (TVKNLH) are Extracellular-facing. Residues 84–104 (LVVLKCWYPLWGTVSFLVAGM) form a helical membrane-spanning segment. At 105–118 (AAMTTVTFPKTSLK) the chain is on the cytoplasmic side. Residues 119–139 (VLCVIANVISLFCALAGFFVI) traverse the membrane as a helical segment. At 140-168 (AKDLFLEGPFPWPIWRPYPEPTTYIQRLE) the chain is on the extracellular side. A helical transmembrane segment spans residues 169 to 189 (LTLFCFTFLEIFLSGSTAITA). Topologically, residues 190 to 267 (YRMKRLQAED…LHTGPRTLRK (78 aa)) are cytoplasmic.

Belongs to the MS4A family. Expressed in thymus, kidney, colon, brain and testis. Expressed also by various hematopoietic and lymphoblastoid cell lines.

It is found in the membrane. Functionally, may be involved in signal transduction as a component of a multimeric receptor complex. In Mus musculus (Mouse), this protein is Membrane-spanning 4-domains subfamily A member 10 (Ms4a10).